The sequence spans 209 residues: Ribosomal RNA large subunit methyltransferase E (209 aa).

S-adenosyl-L-methionine is bound by residues Gly63, Trp65, Asp83, Asp99, and Asp124. Lys164 serves as the catalytic Proton acceptor.

Belongs to the class I-like SAM-binding methyltransferase superfamily. RNA methyltransferase RlmE family.

The protein localises to the cytoplasm. The enzyme catalyses uridine(2552) in 23S rRNA + S-adenosyl-L-methionine = 2'-O-methyluridine(2552) in 23S rRNA + S-adenosyl-L-homocysteine + H(+). Specifically methylates the uridine in position 2552 of 23S rRNA at the 2'-O position of the ribose in the fully assembled 50S ribosomal subunit. The sequence is that of Ribosomal RNA large subunit methyltransferase E from Baumannia cicadellinicola subsp. Homalodisca coagulata.